Here is a 374-residue protein sequence, read N- to C-terminus: Tomoregulin-2 (374 aa).

The signal sequence occupies residues 1 to 40 (MVLWESPRQCSSWTLCEGFCWLLLLPVTLLIIARPVKLAA). At 41 to 320 (FPTSLSDCQT…VPGPVRFQYV (280 aa)) the chain is on the extracellular side. A glycan (N-linked (GlcNAc...) asparagine) is linked at N55. 2 Kazal-like domains span residues 90–137 (VCQF…SCAT) and 181–229 (VCNI…RCQD). 6 disulfides stabilise this stretch: C91–C121, C95–C114, C103–C135, C182–C213, C186–C206, and C195–C227. Residue N230 is glycosylated (N-linked (GlcNAc...) asparagine). Residues 261 to 301 (HHIPCPEHYNGFCMHGKCEHSINMQEPSCRCDAGYTGQHCE) enclose the EGF-like domain. 3 disulfide bridges follow: C265–C278, C273–C289, and C291–C300. The segment at 303-320 (KDYSVLYVVPGPVRFQYV) is required for shedding. A helical transmembrane segment spans residues 321–341 (LIAAVIGTIQIAVICVVVLCI). Residues 342 to 374 (TRKCPRSNRIHRQKQNTGHYSSDNTTRASTRLI) lie on the Cytoplasmic side of the membrane. Residues 353–374 (RQKQNTGHYSSDNTTRASTRLI) form a disordered region. Residues 356 to 374 (QNTGHYSSDNTTRASTRLI) show a composition bias toward polar residues.

This sequence belongs to the tomoregulin family. O-glycosylated; contains chondroitin sulfate glycosaminoglycans. In terms of processing, a soluble form (TMEFF2-ECD) is produced by proteolytic shedding. This shedding can be induced by phorbol ester or pro-inflammatory cytokines such as TNFalpha, and is mediated by a metalloproteinase ADAM. In terms of tissue distribution, widely expressed in the brain. In the olfactory bulb expressed in mitral cell, granule, and glomerular layers. In the hippocampus expressed in hippocampal cornu ammonis, pyramidal layer, dentate gyrus, and substantia nigra pars compacta.

The protein localises to the membrane. May be a survival factor for hippocampal and mesencephalic neurons. The shedded form may up-regulate cell proliferation. The polypeptide is Tomoregulin-2 (Tmeff2) (Mus musculus (Mouse)).